The chain runs to 176 residues: 3-hydroxydecanoyl-[acyl-carrier-protein] dehydratase (176 aa).

Residue H71 is part of the active site.

Belongs to the thioester dehydratase family. FabA subfamily. As to quaternary structure, homodimer.

The protein localises to the cytoplasm. The enzyme catalyses a (3R)-hydroxyacyl-[ACP] = a (2E)-enoyl-[ACP] + H2O. It catalyses the reaction (3R)-hydroxydecanoyl-[ACP] = (2E)-decenoyl-[ACP] + H2O. The catalysed reaction is (2E)-decenoyl-[ACP] = (3Z)-decenoyl-[ACP]. The protein operates within lipid metabolism; fatty acid biosynthesis. Functionally, necessary for the introduction of cis unsaturation into fatty acids. Catalyzes the dehydration of (3R)-3-hydroxydecanoyl-ACP to E-(2)-decenoyl-ACP and then its isomerization to Z-(3)-decenoyl-ACP. Can catalyze the dehydratase reaction for beta-hydroxyacyl-ACPs with saturated chain lengths up to 16:0, being most active on intermediate chain length. The sequence is that of 3-hydroxydecanoyl-[acyl-carrier-protein] dehydratase from Rhodopseudomonas palustris (strain BisB18).